The chain runs to 228 residues: Cytochrome c oxidase subunit 2 (228 aa).

The Mitochondrial intermembrane portion of the chain corresponds to Met-1–Ser-14. The helical transmembrane segment at Pro-15–Met-45 threads the bilayer. The Mitochondrial matrix segment spans residues Leu-46–Gln-58. Residues Glu-59–Met-86 traverse the membrane as a helical segment. Topologically, residues Asp-87 to Ser-228 are mitochondrial intermembrane. The Cu cation site is built by His-160, Cys-195, Glu-197, Cys-199, His-203, and Met-206. Position 197 (Glu-197) interacts with Mg(2+).

Belongs to the cytochrome c oxidase subunit 2 family. Component of the cytochrome c oxidase (complex IV, CIV), a multisubunit enzyme composed of 14 subunits. The complex is composed of a catalytic core of 3 subunits MT-CO1, MT-CO2 and MT-CO3, encoded in the mitochondrial DNA, and 11 supernumerary subunits COX4I, COX5A, COX5B, COX6A, COX6B, COX6C, COX7A, COX7B, COX7C, COX8 and NDUFA4, which are encoded in the nuclear genome. The complex exists as a monomer or a dimer and forms supercomplexes (SCs) in the inner mitochondrial membrane with NADH-ubiquinone oxidoreductase (complex I, CI) and ubiquinol-cytochrome c oxidoreductase (cytochrome b-c1 complex, complex III, CIII), resulting in different assemblies (supercomplex SCI(1)III(2)IV(1) and megacomplex MCI(2)III(2)IV(2)). Found in a complex with TMEM177, COA6, COX18, COX20, SCO1 and SCO2. Interacts with TMEM177 in a COX20-dependent manner. Interacts with COX20. Interacts with COX16. Cu cation is required as a cofactor.

The protein localises to the mitochondrion inner membrane. The enzyme catalyses 4 Fe(II)-[cytochrome c] + O2 + 8 H(+)(in) = 4 Fe(III)-[cytochrome c] + 2 H2O + 4 H(+)(out). Functionally, component of the cytochrome c oxidase, the last enzyme in the mitochondrial electron transport chain which drives oxidative phosphorylation. The respiratory chain contains 3 multisubunit complexes succinate dehydrogenase (complex II, CII), ubiquinol-cytochrome c oxidoreductase (cytochrome b-c1 complex, complex III, CIII) and cytochrome c oxidase (complex IV, CIV), that cooperate to transfer electrons derived from NADH and succinate to molecular oxygen, creating an electrochemical gradient over the inner membrane that drives transmembrane transport and the ATP synthase. Cytochrome c oxidase is the component of the respiratory chain that catalyzes the reduction of oxygen to water. Electrons originating from reduced cytochrome c in the intermembrane space (IMS) are transferred via the dinuclear copper A center (CU(A)) of subunit 2 and heme A of subunit 1 to the active site in subunit 1, a binuclear center (BNC) formed by heme A3 and copper B (CU(B)). The BNC reduces molecular oxygen to 2 water molecules using 4 electrons from cytochrome c in the IMS and 4 protons from the mitochondrial matrix. The polypeptide is Cytochrome c oxidase subunit 2 (MT-CO2) (Anas platyrhynchos (Mallard)).